We begin with the raw amino-acid sequence, 39 residues long: Photosystem II reaction center protein Psb30 (39 aa).

A helical transmembrane segment spans residues 12-32 (IFQLTFVGLIMVAGPVVIFLL).

Belongs to the Psb30/Ycf12 family. PSII is composed of 1 copy each of membrane proteins PsbA, PsbB, PsbC, PsbD, PsbE, PsbF, PsbH, PsbI, PsbJ, PsbK, PsbL, PsbM, PsbT, PsbX, PsbY, PsbZ, Psb30/Ycf12, peripheral proteins PsbO, CyanoQ (PsbQ), PsbU, PsbV and a large number of cofactors. It forms dimeric complexes.

It is found in the cellular thylakoid membrane. A core subunit of photosystem II (PSII), probably helps stabilize the reaction center. This Rippkaea orientalis (strain PCC 8801 / RF-1) (Cyanothece sp. (strain PCC 8801)) protein is Photosystem II reaction center protein Psb30.